We begin with the raw amino-acid sequence, 352 residues long: uncharacterized protein (352 aa).

A coiled-coil region spans residues 285–352 (FQHLRNARER…IKSEIRRLQR (68 aa)).

This is an uncharacterized protein from Emericella nidulans (strain FGSC A4 / ATCC 38163 / CBS 112.46 / NRRL 194 / M139) (Aspergillus nidulans).